A 113-amino-acid chain; its full sequence is Small ribosomal subunit protein uS17 (113 aa).

Belongs to the universal ribosomal protein uS17 family. Part of the 30S ribosomal subunit.

Its function is as follows. One of the primary rRNA binding proteins, it binds specifically to the 5'-end of 16S ribosomal RNA. The chain is Small ribosomal subunit protein uS17 from Nanoarchaeum equitans (strain Kin4-M).